A 462-amino-acid polypeptide reads, in one-letter code: MQEGKISQIIGPVVDVDFPEGQLPSILDALTITRPDGSRLVLETQQHLGEERVRTVAMESTDGLIRGLSVANTGRPIQAPVGEGVLGRMLNVVGDPIDGRGPVNATKTYSIHRSAPKFEDLSTKAEMFETGIKVIDLLEPYSRGGKTGLFGGAGVGKTVLIMELINNIAKQQSGYSVFAGVGERTREGNDLWHEMMESGVIDKTALVFGQMNEPPGARARVALTGLSIAEYFRDEEHRDVLLFIDNIFRFTQAGSEVSALLGRMPSAVGYQPTLATEMGELQDRITSTKNGSVTSVQAIYVPADDLTDPAPATAFAHLDATTVLSRQIAELGIYPAVDPLDSTSRILDPNVIGDDHYDTAQSVKQILQRYKDLQDIIAILGMDELSDEDKLVVARARKVQRFLSQPFFVAEAFTGLAGKYVKLEDSIKGFKEIIAGKHDNLPEGAFYLVGTIEEAIEKAKTL.

An ATP-binding site is contributed by 151-158; the sequence is GGAGVGKT.

This sequence belongs to the ATPase alpha/beta chains family. In terms of assembly, F-type ATPases have 2 components, CF(1) - the catalytic core - and CF(0) - the membrane proton channel. CF(1) has five subunits: alpha(3), beta(3), gamma(1), delta(1), epsilon(1). CF(0) has four main subunits: a(1), b(1), b'(1) and c(9-12).

The protein resides in the cell inner membrane. It catalyses the reaction ATP + H2O + 4 H(+)(in) = ADP + phosphate + 5 H(+)(out). Produces ATP from ADP in the presence of a proton gradient across the membrane. The catalytic sites are hosted primarily by the beta subunits. In Chlorobium luteolum (strain DSM 273 / BCRC 81028 / 2530) (Pelodictyon luteolum), this protein is ATP synthase subunit beta 1.